The following is a 44-amino-acid chain: SPbeta prophage-derived uncharacterized protein YosI (44 aa).

This chain is SPbeta prophage-derived uncharacterized protein YosI (yosI), found in Bacillus subtilis (strain 168).